Consider the following 308-residue polypeptide: Ribosomal RNA large subunit methyltransferase F (308 aa).

The tract at residues 190–212 is disordered; it reads DSAASARAGSERKRRNLGQDKND.

It belongs to the methyltransferase superfamily. METTL16/RlmF family.

The protein localises to the cytoplasm. It carries out the reaction adenosine(1618) in 23S rRNA + S-adenosyl-L-methionine = N(6)-methyladenosine(1618) in 23S rRNA + S-adenosyl-L-homocysteine + H(+). Functionally, specifically methylates the adenine in position 1618 of 23S rRNA. The sequence is that of Ribosomal RNA large subunit methyltransferase F from Citrobacter koseri (strain ATCC BAA-895 / CDC 4225-83 / SGSC4696).